Here is a 174-residue protein sequence, read N- to C-terminus: Cytidylate kinase (174 aa).

7-15 (GLPGTGTTT) lines the ATP pocket.

It belongs to the cytidylate kinase family. Type 2 subfamily.

It localises to the cytoplasm. It carries out the reaction CMP + ATP = CDP + ADP. The catalysed reaction is dCMP + ATP = dCDP + ADP. In Methanococcus vannielii (strain ATCC 35089 / DSM 1224 / JCM 13029 / OCM 148 / SB), this protein is Cytidylate kinase.